A 100-amino-acid chain; its full sequence is MSRVCDITGQTKSFGNKVSHSNRKTKRTYLVNLHNVTLFSDVLNRKFRFKISSRTLRTIDYKGGFDLYLLETSSRKLSDKAQKIKKMIKKATAENVKVSL.

The protein belongs to the bacterial ribosomal protein bL28 family.

The protein is Large ribosomal subunit protein bL28 of Ehrlichia ruminantium (strain Gardel).